The chain runs to 131 residues: D-ribose pyranase (131 aa).

Catalysis depends on His20, which acts as the Proton donor. Substrate is bound by residues Asp28, His98, and 120-122; that span reads YAN.

Belongs to the RbsD / FucU family. RbsD subfamily. Homodecamer.

The protein localises to the cytoplasm. The enzyme catalyses beta-D-ribopyranose = beta-D-ribofuranose. Its pathway is carbohydrate metabolism; D-ribose degradation; D-ribose 5-phosphate from beta-D-ribopyranose: step 1/2. Catalyzes the interconversion of beta-pyran and beta-furan forms of D-ribose. In Enterococcus faecalis (strain ATCC 700802 / V583), this protein is D-ribose pyranase.